The following is a 366-amino-acid chain: D-alanine--D-alanine ligase (366 aa).

In terms of domain architecture, ATP-grasp spans 144 to 347; the sequence is KRLLKDAGLK…YRELIENLIE (204 aa). Residue 174–229 coordinates ATP; sequence KEELGLPMFIKPANQGSSVGVHKVENEEQFYSAIKDAFQFDHKLLVEEAIVGREIE. Asp-301, Glu-314, and Asn-316 together coordinate Mg(2+).

The protein belongs to the D-alanine--D-alanine ligase family. It depends on Mg(2+) as a cofactor. The cofactor is Mn(2+).

The protein resides in the cytoplasm. It catalyses the reaction 2 D-alanine + ATP = D-alanyl-D-alanine + ADP + phosphate + H(+). The protein operates within cell wall biogenesis; peptidoglycan biosynthesis. Cell wall formation. The chain is D-alanine--D-alanine ligase from Oceanobacillus iheyensis (strain DSM 14371 / CIP 107618 / JCM 11309 / KCTC 3954 / HTE831).